The primary structure comprises 520 residues: 2-isopropylmalate synthase (520 aa).

Residues 4-266 (VEFLDTTLRD…TSDIVLNETV (263 aa)) enclose the Pyruvate carboxyltransferase domain. Mn(2+) is bound by residues Asp13, His201, His203, and Asn237. The tract at residues 390–520 (HFGDLKLTSN…AVSFRDVPTN (131 aa)) is regulatory domain.

The protein belongs to the alpha-IPM synthase/homocitrate synthase family. LeuA type 1 subfamily. In terms of assembly, homodimer. Requires Mn(2+) as cofactor.

It is found in the cytoplasm. The enzyme catalyses 3-methyl-2-oxobutanoate + acetyl-CoA + H2O = (2S)-2-isopropylmalate + CoA + H(+). It participates in amino-acid biosynthesis; L-leucine biosynthesis; L-leucine from 3-methyl-2-oxobutanoate: step 1/4. Functionally, catalyzes the condensation of the acetyl group of acetyl-CoA with 3-methyl-2-oxobutanoate (2-ketoisovalerate) to form 3-carboxy-3-hydroxy-4-methylpentanoate (2-isopropylmalate). The protein is 2-isopropylmalate synthase of Streptococcus gallolyticus (strain UCN34).